Consider the following 340-residue polypeptide: Phosphate acyltransferase (340 aa).

It belongs to the PlsX family. As to quaternary structure, homodimer. Probably interacts with PlsY.

It localises to the cytoplasm. It catalyses the reaction a fatty acyl-[ACP] + phosphate = an acyl phosphate + holo-[ACP]. Its pathway is lipid metabolism; phospholipid metabolism. Functionally, catalyzes the reversible formation of acyl-phosphate (acyl-PO(4)) from acyl-[acyl-carrier-protein] (acyl-ACP). This enzyme utilizes acyl-ACP as fatty acyl donor, but not acyl-CoA. The polypeptide is Phosphate acyltransferase (Nostoc punctiforme (strain ATCC 29133 / PCC 73102)).